A 41-amino-acid chain; its full sequence is Photosystem II reaction center protein Y (41 aa).

A helical transmembrane segment spans residues 5–23 (VLIVLAPVIIAGSWALFNI).

This sequence belongs to the PsbY family. PSII is composed of 1 copy each of membrane proteins PsbA, PsbB, PsbC, PsbD, PsbE, PsbF, PsbH, PsbI, PsbJ, PsbK, PsbL, PsbM, PsbT, PsbX, PsbY, PsbZ, Psb30/Ycf12, peripheral proteins PsbO, CyanoQ (PsbQ), PsbU, PsbV and a large number of cofactors. It forms dimeric complexes.

The protein resides in the cellular thylakoid membrane. Functionally, loosely associated component of the core of photosystem II (PSII), it is not always seen in crystals. PSII is a light-driven water plastoquinone oxidoreductase, using light energy to abstract electrons from H(2)O, generating a proton gradient subsequently used for ATP formation. The sequence is that of Photosystem II reaction center protein Y from Gloeothece citriformis (strain PCC 7424) (Cyanothece sp. (strain PCC 7424)).